We begin with the raw amino-acid sequence, 73 residues long: MDGKAPAAYVDPAEFNEVMKRLEKIDEKVEFVNSEVAQRIGKKVGRDIGILYGAVVGLLLFLIYVSVSSMFTI.

The helical transmembrane segment at 48 to 68 (IGILYGAVVGLLLFLIYVSVS) threads the bilayer.

Belongs to the MtrG family. In terms of assembly, the complex is composed of 8 subunits; MtrA, MtrB, MtrC, MtrD, MtrE, MtrF, MtrG and MtrH.

It is found in the cell membrane. The enzyme catalyses 5-methyl-5,6,7,8-tetrahydromethanopterin + coenzyme M + 2 Na(+)(in) = 5,6,7,8-tetrahydromethanopterin + methyl-coenzyme M + 2 Na(+)(out). Its pathway is one-carbon metabolism; methanogenesis from CO(2); methyl-coenzyme M from 5,10-methylene-5,6,7,8-tetrahydromethanopterin: step 2/2. Functionally, part of a complex that catalyzes the formation of methyl-coenzyme M and tetrahydromethanopterin from coenzyme M and methyl-tetrahydromethanopterin. This is an energy-conserving, sodium-ion translocating step. The protein is Tetrahydromethanopterin S-methyltransferase subunit G of Methanosarcina acetivorans (strain ATCC 35395 / DSM 2834 / JCM 12185 / C2A).